Reading from the N-terminus, the 380-residue chain is Erythronate-4-phosphate dehydrogenase (380 aa).

Residues S45 and T66 each coordinate substrate. NAD(+)-binding positions include 126–127, D146, T174, 205–207, and D231; these read QV and ASR. The active site involves R207. E236 is a catalytic residue. H253 functions as the Proton donor in the catalytic mechanism. G256 serves as a coordination point for NAD(+). Y257 is a substrate binding site.

Belongs to the D-isomer specific 2-hydroxyacid dehydrogenase family. PdxB subfamily. As to quaternary structure, homodimer.

It is found in the cytoplasm. The enzyme catalyses 4-phospho-D-erythronate + NAD(+) = (R)-3-hydroxy-2-oxo-4-phosphooxybutanoate + NADH + H(+). The protein operates within cofactor biosynthesis; pyridoxine 5'-phosphate biosynthesis; pyridoxine 5'-phosphate from D-erythrose 4-phosphate: step 2/5. Catalyzes the oxidation of erythronate-4-phosphate to 3-hydroxy-2-oxo-4-phosphonooxybutanoate. This Azotobacter vinelandii (strain DJ / ATCC BAA-1303) protein is Erythronate-4-phosphate dehydrogenase.